The chain runs to 267 residues: MSDILDKIVATKKIEVAHNSSKISLGNHREQAEANNQSNLLKPRGFIQAIERKISAGKAGVITEVKKASPSKGILRENFISAEIAQSYEKHGAACLSVLTDSDYFQGCNAYLQEARAACQIPVLRKDFTIDPYQIYEARAIGADAILLIVACLELNQMMELEACAHELGLDVLVEVHNAPELEQALELKTPLLGINNRNLKTFEVSLQTTLSLLSSVPKNKTLVTESGILSRADVELMRKNQINAFLVGEAFMRAPDPGTALSELFA.

The protein belongs to the TrpC family.

It carries out the reaction 1-(2-carboxyphenylamino)-1-deoxy-D-ribulose 5-phosphate + H(+) = (1S,2R)-1-C-(indol-3-yl)glycerol 3-phosphate + CO2 + H2O. Its pathway is amino-acid biosynthesis; L-tryptophan biosynthesis; L-tryptophan from chorismate: step 4/5. This Polynucleobacter asymbioticus (strain DSM 18221 / CIP 109841 / QLW-P1DMWA-1) (Polynucleobacter necessarius subsp. asymbioticus) protein is Indole-3-glycerol phosphate synthase.